A 101-amino-acid chain; its full sequence is Olivetolic acid cyclase (101 aa).

The 95-residue stretch at 3 to 97 folds into the Stress-response A/B barrel domain; the sequence is VKHLIVLKFK…FWEKLLIFDY (95 aa). 3,5,7-trioxododecanoyl-CoA is bound at residue histidine 5. Valine 31, isoleucine 34, and methionine 37 together coordinate Mg(2+). Tyrosine 72 serves as a coordination point for 3,5,7-trioxododecanoyl-CoA. Active-site acid/base catalyst residues include tyrosine 72 and histidine 75.

Homodimer. As to expression, expressed in glandular trichomes and at lower levels in female flowers.

Its subcellular location is the cytoplasm. The enzyme catalyses 3,5,7-trioxododecanoyl-CoA = olivetolate + CoA + H(+). It participates in secondary metabolite biosynthesis; terpenoid biosynthesis. In terms of biological role, involved in the biosynthesis of cannabinoids-related terpenophenolic natural products, which have pharmacological activity. Polyketide cyclase which functions in concert with OLS/TKS to form olivetolic acid. Has no intrinsic polyketide synthase activity and requires the presence of OLS to produce olivetolic acid. In Cannabis sativa (Hemp), this protein is Olivetolic acid cyclase.